Reading from the N-terminus, the 131-residue chain is Fumarate reductase subunit C (131 aa).

Helical transmembrane passes span 30-50, 63-83, and 109-129; these read EGTA…LFAL, FLQN…ALLH, and IIKS…FVAL.

It belongs to the FrdC family. Part of an enzyme complex containing four subunits: a flavoprotein (FrdA), an iron-sulfur protein (FrdB), and two hydrophobic anchor proteins (FrdC and FrdD).

It is found in the cell inner membrane. In terms of biological role, two distinct, membrane-bound, FAD-containing enzymes are responsible for the catalysis of fumarate and succinate interconversion; fumarate reductase is used in anaerobic growth, and succinate dehydrogenase is used in aerobic growth. Anchors the catalytic components of the fumarate reductase complex to the cell inner membrane, binds quinones. This Shigella boydii serotype 4 (strain Sb227) protein is Fumarate reductase subunit C.